Here is a 622-residue protein sequence, read N- to C-terminus: Low affinity potassium transport system protein Kup (622 aa).

12 helical membrane-spanning segments follow: residues 9–29 (LPAITLAAIGVVYGDIGTSPL), 49–69 (VFGFLSLIFWLLIFVVSIKYL), 103–123 (VIMGLIGGSFFYGEVVITPAI), 137–157 (PQLDTWIVPLSIIVLTLLFMI), 165–185 (VGKLFAPIMLTWFLILAGLGL), 213–233 (VSFIALGAVVLSITGVEALYA), 247–267 (WFTVVLPSLTLNYFGQGALLL), 276–296 (PFFLLAPDWALIPLLIIAALA), 337–357 (IYIPFVNWMLYVAVVIVIVSF), 363–383 (LAAAYGIAVTGTMVLTSILST), 396–416 (FVALILIAFLCVDIPLFTANL), and 419–439 (LLSGGWLPLSLGTVMFIVMTT).

It belongs to the HAK/KUP transporter (TC 2.A.72) family.

The protein resides in the cell inner membrane. It carries out the reaction K(+)(in) + H(+)(in) = K(+)(out) + H(+)(out). Responsible for the low-affinity transport of potassium into the cell. Likely operates as a K(+):H(+) symporter. This chain is Low affinity potassium transport system protein Kup, found in Escherichia coli (strain K12 / MC4100 / BW2952).